The primary structure comprises 221 residues: MDLAKYIDHTQLKPDTTKQSIVKIVEEAKQHEFASVCVNPHWVSYCYNELKDTPVKVCTVIGFPLGATSTETKIFETNQAIADGATEVDMVINVGELKSNNDAFVEKDIRAVVEAAKGKALTKVIIETSLLTEDEKVRACKLAKNAEADYVKTSTGFSGGGATVEDIRLMRETVGPEMGVKASGGVRDLEQTEAMIEAGATRIGASSGVAIVSGEQGTSDY.

D89 acts as the Proton donor/acceptor in catalysis. K152 (schiff-base intermediate with acetaldehyde) is an active-site residue. Residue K181 is the Proton donor/acceptor of the active site.

The protein belongs to the DeoC/FbaB aldolase family. DeoC type 1 subfamily.

Its subcellular location is the cytoplasm. The enzyme catalyses 2-deoxy-D-ribose 5-phosphate = D-glyceraldehyde 3-phosphate + acetaldehyde. It participates in carbohydrate degradation; 2-deoxy-D-ribose 1-phosphate degradation; D-glyceraldehyde 3-phosphate and acetaldehyde from 2-deoxy-alpha-D-ribose 1-phosphate: step 2/2. Functionally, catalyzes a reversible aldol reaction between acetaldehyde and D-glyceraldehyde 3-phosphate to generate 2-deoxy-D-ribose 5-phosphate. In Oceanobacillus iheyensis (strain DSM 14371 / CIP 107618 / JCM 11309 / KCTC 3954 / HTE831), this protein is Deoxyribose-phosphate aldolase 1.